Consider the following 312-residue polypeptide: Ribonuclease HIII (312 aa).

The RNase H type-2 domain occupies 95-312 (MSILGSDEVG…TEKAFRLLKK (218 aa)). Asp-101, Glu-102, and Asp-206 together coordinate a divalent metal cation.

It belongs to the RNase HII family. RnhC subfamily. Mn(2+) serves as cofactor. The cofactor is Mg(2+).

It localises to the cytoplasm. The enzyme catalyses Endonucleolytic cleavage to 5'-phosphomonoester.. Its function is as follows. Endonuclease that specifically degrades the RNA of RNA-DNA hybrids. The chain is Ribonuclease HIII from Bacillus mycoides (strain KBAB4) (Bacillus weihenstephanensis).